We begin with the raw amino-acid sequence, 430 residues long: 3-phosphoshikimate 1-carboxyvinyltransferase (430 aa).

3 residues coordinate 3-phosphoshikimate: lysine 21, serine 22, and arginine 26. Lysine 21 lines the phosphoenolpyruvate pocket. Glycine 94 and arginine 122 together coordinate phosphoenolpyruvate. Serine 168, glutamine 170, aspartate 315, and lysine 342 together coordinate 3-phosphoshikimate. Position 170 (glutamine 170) interacts with phosphoenolpyruvate. Aspartate 315 (proton acceptor) is an active-site residue. Phosphoenolpyruvate is bound by residues arginine 346 and arginine 389.

It belongs to the EPSP synthase family. Monomer.

Its subcellular location is the cytoplasm. It catalyses the reaction 3-phosphoshikimate + phosphoenolpyruvate = 5-O-(1-carboxyvinyl)-3-phosphoshikimate + phosphate. It functions in the pathway metabolic intermediate biosynthesis; chorismate biosynthesis; chorismate from D-erythrose 4-phosphate and phosphoenolpyruvate: step 6/7. Its function is as follows. Catalyzes the transfer of the enolpyruvyl moiety of phosphoenolpyruvate (PEP) to the 5-hydroxyl of shikimate-3-phosphate (S3P) to produce enolpyruvyl shikimate-3-phosphate and inorganic phosphate. This is 3-phosphoshikimate 1-carboxyvinyltransferase from Salinibacter ruber (strain DSM 13855 / M31).